The chain runs to 327 residues: Quinone oxidoreductase 1 (327 aa).

NADP(+) contacts are provided by residues 42-46, Y130, 152-153, 173-177, Y192, S216, 238-241, 264-266, and R317; these read FIDTY, GV, GTAQK, FGNS, and PSL.

The protein belongs to the zinc-containing alcohol dehydrogenase family. Quinone oxidoreductase subfamily. In terms of assembly, homodimer.

It catalyses the reaction 2 a quinone + NADPH + H(+) = 2 a 1,4-benzosemiquinone + NADP(+). The protein is Quinone oxidoreductase 1 (qorA) of Escherichia coli (strain K12).